Consider the following 441-residue polypeptide: MLSAFISSLRTVDLRRKILFTLGIVILYRVGAALPSPGVNFPNVQQCIKEASAGEAGQIYSLINLFSGGALLKLTVFAVGVMPYITASIIVQLLTVVIPRFEELRKEGQAGQSKMTQYTRYLAIALAILQATSIVALAANGGLLQGCSLDIIADQSIFTLVVIVLVMTGGAALVMWMGELITERGIGNGMSLLIFVGIAARIPAEGQSILESRGGVVFTAVCAAALIIIVGVVFVEQGQRRIPVQYAKRMVGRRMYGGTSTYLPLKVNQAGVIPVIFASSLIYIPHLITQLIRSGSGVVGNSWWDKFVGTYLSDPSNLVYIGIYFGLIIFFTYFYVSITFNPDERADEMKKFGGFIPGIRPGRPTADYLRYVLSRITLPGSIYLGVIAVLPNLFLQIGAGGTVQNLPFGGTAVLIMIGVGLDTVKQIESQLMQRNYEGFLK.

The next 10 membrane-spanning stretches (helical) occupy residues 18–38 (ILFT…PSPG), 78–98 (AVGV…TVVI), 124–144 (IALA…GGLL), 157–177 (IFTL…VMWM), 180–200 (LITE…GIAA), 215–235 (GVVF…VVFV), 272–292 (VIPV…TQLI), 318–338 (LVYI…YVSI), 382–402 (IYLG…AGGT), and 403–423 (VQNL…GLDT).

Belongs to the SecY/SEC61-alpha family. In terms of assembly, component of the Sec protein translocase complex. Heterotrimer consisting of SecY, SecE and SecG subunits. The heterotrimers can form oligomers, although 1 heterotrimer is thought to be able to translocate proteins. Interacts with the ribosome. Interacts with SecDF, and other proteins may be involved. Interacts with SecA.

The protein resides in the cell membrane. Its function is as follows. The central subunit of the protein translocation channel SecYEG. Consists of two halves formed by TMs 1-5 and 6-10. These two domains form a lateral gate at the front which open onto the bilayer between TMs 2 and 7, and are clamped together by SecE at the back. The channel is closed by both a pore ring composed of hydrophobic SecY resides and a short helix (helix 2A) on the extracellular side of the membrane which forms a plug. The plug probably moves laterally to allow the channel to open. The ring and the pore may move independently. The polypeptide is Protein translocase subunit SecY (Mycobacterium bovis (strain ATCC BAA-935 / AF2122/97)).